A 383-amino-acid polypeptide reads, in one-letter code: Lipid-A-disaccharide synthase (383 aa).

This sequence belongs to the LpxB family.

It carries out the reaction a lipid X + a UDP-2-N,3-O-bis[(3R)-3-hydroxyacyl]-alpha-D-glucosamine = a lipid A disaccharide + UDP + H(+). The protein operates within bacterial outer membrane biogenesis; LPS lipid A biosynthesis. Condensation of UDP-2,3-diacylglucosamine and 2,3-diacylglucosamine-1-phosphate to form lipid A disaccharide, a precursor of lipid A, a phosphorylated glycolipid that anchors the lipopolysaccharide to the outer membrane of the cell. This is Lipid-A-disaccharide synthase from Anaeromyxobacter dehalogenans (strain 2CP-C).